The primary structure comprises 269 residues: Rhamnulose-1-phosphate aldolase (269 aa).

The active site involves glutamate 119. Histidine 142, histidine 144, and histidine 214 together coordinate Zn(2+).

This sequence belongs to the aldolase class II family. RhaD subfamily. The cofactor is Zn(2+).

It is found in the cytoplasm. It carries out the reaction L-rhamnulose 1-phosphate = (S)-lactaldehyde + dihydroxyacetone phosphate. It participates in carbohydrate degradation; L-rhamnose degradation; glycerone phosphate from L-rhamnose: step 3/3. In terms of biological role, catalyzes the reversible cleavage of L-rhamnulose-1-phosphate to dihydroxyacetone phosphate (DHAP) and L-lactaldehyde. This Bacteroides thetaiotaomicron (strain ATCC 29148 / DSM 2079 / JCM 5827 / CCUG 10774 / NCTC 10582 / VPI-5482 / E50) protein is Rhamnulose-1-phosphate aldolase.